The primary structure comprises 312 residues: Pantothenate kinase (312 aa).

Residue 97-104 coordinates ATP; sequence GSVAVGKS.

The protein belongs to the prokaryotic pantothenate kinase family.

It is found in the cytoplasm. The catalysed reaction is (R)-pantothenate + ATP = (R)-4'-phosphopantothenate + ADP + H(+). It functions in the pathway cofactor biosynthesis; coenzyme A biosynthesis; CoA from (R)-pantothenate: step 1/5. The sequence is that of Pantothenate kinase from Mycolicibacterium gilvum (strain PYR-GCK) (Mycobacterium gilvum (strain PYR-GCK)).